A 219-amino-acid chain; its full sequence is Phosphoribosylformylglycinamidine synthase subunit PurQ (219 aa).

The 218-residue stretch at 2–219 (KIAVITFPGS…KVVLDLILGS (218 aa)) folds into the Glutamine amidotransferase type-1 domain. Catalysis depends on Cys-86, which acts as the Nucleophile. Catalysis depends on residues His-195 and Glu-197.

Part of the FGAM synthase complex composed of 1 PurL, 1 PurQ and 2 PurS subunits.

It localises to the cytoplasm. The enzyme catalyses N(2)-formyl-N(1)-(5-phospho-beta-D-ribosyl)glycinamide + L-glutamine + ATP + H2O = 2-formamido-N(1)-(5-O-phospho-beta-D-ribosyl)acetamidine + L-glutamate + ADP + phosphate + H(+). It catalyses the reaction L-glutamine + H2O = L-glutamate + NH4(+). The protein operates within purine metabolism; IMP biosynthesis via de novo pathway; 5-amino-1-(5-phospho-D-ribosyl)imidazole from N(2)-formyl-N(1)-(5-phospho-D-ribosyl)glycinamide: step 1/2. In terms of biological role, part of the phosphoribosylformylglycinamidine synthase complex involved in the purines biosynthetic pathway. Catalyzes the ATP-dependent conversion of formylglycinamide ribonucleotide (FGAR) and glutamine to yield formylglycinamidine ribonucleotide (FGAM) and glutamate. The FGAM synthase complex is composed of three subunits. PurQ produces an ammonia molecule by converting glutamine to glutamate. PurL transfers the ammonia molecule to FGAR to form FGAM in an ATP-dependent manner. PurS interacts with PurQ and PurL and is thought to assist in the transfer of the ammonia molecule from PurQ to PurL. This Leptospira interrogans serogroup Icterohaemorrhagiae serovar copenhageni (strain Fiocruz L1-130) protein is Phosphoribosylformylglycinamidine synthase subunit PurQ.